Consider the following 458-residue polypeptide: Protein adenylyltransferase FICD (458 aa).

At 1 to 23 (MMLIPMASVMAVTEPKWVSVWSR) the chain is on the cytoplasmic side. The chain crosses the membrane as a helical; Signal-anchor for type II membrane protein span at residues 24 to 44 (FLWVTLLSMVLGSLLALLLPL). The Lumenal portion of the chain corresponds to 45-458 (GAVEEQCLAV…GFKETLPVKP (414 aa)). Ser79 bears the O-AMP-serine; by autocatalysis mark. At Thr80 the chain carries O-AMP-threonine; by autocatalysis. TPR repeat units follow at residues 106-139 (ARAA…DPDF) and 140-173 (VDAL…SPYH). O-AMP-threonine; by autocatalysis is present on Thr183. An Inhibitory (S/T)XXXE(G/N) motif motif is present at residues 230 to 235 (TVAIEG). Position 234 (Glu234) interacts with ATP. Asn275 carries an N-linked (GlcNAc...) asparagine glycan. The region spanning 285-420 (VTISDVLEIH…VRPFIRFIAK (136 aa)) is the Fido domain. ATP is bound at residue 316 to 319 (VGHH). The active site involves His363. Residues 367–374 (DGNGRTSR), 399–400 (YY), and Asn407 contribute to the ATP site. Residue Asn446 is glycosylated (N-linked (GlcNAc...) asparagine).

This sequence belongs to the fic family. In terms of assembly, homodimer. Interacts with HD. The cofactor is Mg(2+). Mn(2+) is required as a cofactor. Auto-AMPylated in vitro; it is unclear whether auto-AMPylation is relevant in vivo. In terms of processing, N-glycosylated; predominantly glycosylated at Asn-275. In terms of tissue distribution, ubiquitous.

It localises to the endoplasmic reticulum membrane. It carries out the reaction L-tyrosyl-[protein] + ATP = O-(5'-adenylyl)-L-tyrosyl-[protein] + diphosphate. It catalyses the reaction 3-O-(5'-adenylyl)-L-threonyl-[protein] + H2O = L-threonyl-[protein] + AMP + H(+). The enzyme catalyses L-threonyl-[protein] + ATP = 3-O-(5'-adenylyl)-L-threonyl-[protein] + diphosphate. The side chain of Glu-234 determines which of the two opposing activities (AMPylase or de-AMPylase) will take place. In response to endoplasmic reticulum stress, mediates de-AMPylase activity. Adenylyltransferase activity is inhibited by the inhibitory helix present at the N-terminus: Glu-234 binds ATP and competes with ATP-binding at Arg-374, thereby preventing adenylyltransferase activity. In unstressed cells, disengagement of Glu-234 promotes adenylyltransferase activity. Activation dissociates ATP-binding from Glu-234, allowing ordered binding of the entire ATP moiety with the alpha-phosphate in an orientation that is productive for accepting an incoming target hydroxyl side chain. Protein that can both mediate the addition of adenosine 5'-monophosphate (AMP) to specific residues of target proteins (AMPylation), and the removal of the same modification from target proteins (de-AMPylation), depending on the context. The side chain of Glu-231 determines which of the two opposing activities (AMPylase or de-AMPylase) will take place. Acts as a key regulator of the ERN1/IRE1-mediated unfolded protein response (UPR) by mediating AMPylation or de-AMPylation of HSPA5/BiP. In unstressed cells, acts as an adenylyltransferase by mediating AMPylation of HSPA5/BiP at 'Thr-518', thereby inactivating it. In response to endoplasmic reticulum stress, acts as a phosphodiesterase by mediating removal of ATP (de-AMPylation) from HSPA5/BiP at 'Thr-518', leading to restore HSPA5/BiP activity. Although it is able to AMPylate RhoA, Rac and Cdc42 Rho GTPases in vitro, Rho GTPases do not constitute physiological substrates. In Homo sapiens (Human), this protein is Protein adenylyltransferase FICD.